The following is a 324-amino-acid chain: MSWLTPELIEILITVGKAVVILLVVVTCGAFMSMGERRLLGLFQGRYGPNRVGWGGSLQLVADMIKMFFKEDWVPNFTDKVIFTLAPMIAFTSMLIAFAIVPITPTWGVADLNIGILFFLMMAGLAVYAVLFAGWASNNKYSLLGAVRASAQTVSYEVFIGLSLMGVVAQAGSFNMRDIVDSQEHLWNVIPQFFGFITFAIAGVAVCHRHPFDQPEAEQELADGYHIEYSGMKFGLFFVGEYIGIVTVSALMVTLFFGGWHGPFLPPFVWFALKTGFFMMMFILIRASLPRPRYDQVMAFGWKVCLPITLLNLLATAAVILYNA.

8 consecutive transmembrane segments (helical) span residues 11–31 (ILIT…CGAF), 81–101 (VIFT…FAIV), 114–134 (IGIL…LFAG), 154–174 (VSYE…AGSF), 186–206 (LWNV…GVAV), 237–257 (FFVG…TLFF), 265–285 (LPPF…FILI), and 304–324 (VCLP…LYNA).

This sequence belongs to the complex I subunit 1 family. In terms of assembly, NDH-1 is composed of 13 different subunits. Subunits NuoA, H, J, K, L, M, N constitute the membrane sector of the complex.

Its subcellular location is the cell inner membrane. It carries out the reaction a quinone + NADH + 5 H(+)(in) = a quinol + NAD(+) + 4 H(+)(out). In terms of biological role, NDH-1 shuttles electrons from NADH, via FMN and iron-sulfur (Fe-S) centers, to quinones in the respiratory chain. The immediate electron acceptor for the enzyme in this species is believed to be ubiquinone. Couples the redox reaction to proton translocation (for every two electrons transferred, four hydrogen ions are translocated across the cytoplasmic membrane), and thus conserves the redox energy in a proton gradient. This subunit may bind ubiquinone. The sequence is that of NADH-quinone oxidoreductase subunit H from Pectobacterium atrosepticum (strain SCRI 1043 / ATCC BAA-672) (Erwinia carotovora subsp. atroseptica).